A 155-amino-acid chain; its full sequence is MKIWVDADSCPVRIRQITAKAGERLKLPVIFAANREIPVPKGASMVVTENTEQAADLYITENSVEGDLAITRDIPLAKLLVDKGLYVINDRGTIFTRDNINTYLSARNFMYELQANGLAPEKTNSFGKKEIQKFSNLLDSLLAKALKQRHLDSRF.

Belongs to the UPF0178 family.

The chain is UPF0178 protein TDE_2151 from Treponema denticola (strain ATCC 35405 / DSM 14222 / CIP 103919 / JCM 8153 / KCTC 15104).